The chain runs to 316 residues: Probable cell division protein WhiA (316 aa).

A DNA-binding region (H-T-H motif) is located at residues 275 to 309; it reads TLKELGEMVSGGKISKSGINHRLRKIDEIAEKLRA.

This sequence belongs to the WhiA family.

Its function is as follows. Involved in cell division and chromosome segregation. This Bacillus cereus (strain B4264) protein is Probable cell division protein WhiA.